A 445-amino-acid polypeptide reads, in one-letter code: Anthranilate N-benzoyltransferase protein 1 (445 aa).

Residues histidine 164 and aspartate 392 each act as proton acceptor in the active site.

It belongs to the plant acyltransferase family. N-terminus is blocked.

It carries out the reaction anthranilate + benzoyl-CoA = N-benzoylanthranilate + CoA. The protein operates within phytoalexin biosynthesis; methoxydianthramide B biosynthesis. Its function is as follows. Catalyzes the formation of N-benzoylanthranilate, in the course of methoxydianthramide B, a phytoalexin. Phytoalexins are produced in response to infection by parasites, and are essential for the expression of disease resistance. In Dianthus caryophyllus (Carnation), this protein is Anthranilate N-benzoyltransferase protein 1 (HCBT1).